Reading from the N-terminus, the 823-residue chain is Putative ankyrin repeat domain-containing protein 20A2 (823 aa).

5 ANK repeats span residues 66–95, 99–128, 132–161, 165–194, and 198–227; these read QHRT…QIDV, ENRT…NPNL, YGNT…HIEA, DNNT…SSHA, and LRRS…DVFA. 2 disordered regions span residues 301–343 and 355–402; these read VPEK…EVED and VQTL…LSEN. Residues 372-384 show a composition bias toward basic and acidic residues; that stretch reads QERHERSEKKQPQ. Coiled-coil stretches lie at residues 431 to 480, 565 to 724, and 776 to 805; these read KKLK…KQLE, EMIT…NNST, and LVLE…EKTE.

The polypeptide is Putative ankyrin repeat domain-containing protein 20A2 (Homo sapiens (Human)).